We begin with the raw amino-acid sequence, 122 residues long: Small ribosomal subunit protein uS13 (122 aa).

Residues 95-122 form a disordered region; that stretch reads GLPVRGQRTHTNARTRKGKAKPIAGKKK.

It belongs to the universal ribosomal protein uS13 family. As to quaternary structure, part of the 30S ribosomal subunit. Forms a loose heterodimer with protein S19. Forms two bridges to the 50S subunit in the 70S ribosome.

Functionally, located at the top of the head of the 30S subunit, it contacts several helices of the 16S rRNA. In the 70S ribosome it contacts the 23S rRNA (bridge B1a) and protein L5 of the 50S subunit (bridge B1b), connecting the 2 subunits; these bridges are implicated in subunit movement. Contacts the tRNAs in the A and P-sites. The sequence is that of Small ribosomal subunit protein uS13 from Zymomonas mobilis subsp. mobilis (strain ATCC 31821 / ZM4 / CP4).